Reading from the N-terminus, the 1211-residue chain is A disintegrin and metalloproteinase with thrombospondin motifs 2 (1211 aa).

An N-terminal signal peptide occupies residues 1–29 (MDPPAGAARRLLCPALLLLLLLLPPPLLP). Positions 30–253 (PPPPPANARL…GVLEEHANSS (224 aa)) are excised as a propeptide. N-linked (GlcNAc...) asparagine glycans are attached at residues asparagine 112 and asparagine 251. Positions 266-470 (YNIEVLLGVD…HSYDCLLDDP (205 aa)) constitute a Peptidase M12B domain. Intrachain disulfides connect cysteine 343–cysteine 392, cysteine 386–cysteine 465, cysteine 425–cysteine 451, cysteine 492–cysteine 517, cysteine 503–cysteine 526, cysteine 512–cysteine 545, cysteine 539–cysteine 550, cysteine 573–cysteine 610, cysteine 577–cysteine 615, and cysteine 588–cysteine 600. Position 408 (histidine 408) interacts with Zn(2+). Residue glutamate 409 is part of the active site. Residues histidine 412 and histidine 418 each coordinate Zn(2+). Residues 480-560 (QLPGLHYSMN…IWLTPDILKR (81 aa)) enclose the Disintegrin domain. The region spanning 561 to 616 (DGSWGAWSPFGSCSRTCGTGVKFRTRQCDNPHPANGGRTCSGLAYDFQLCSRQDCP) is the TSP type-1 1 domain. The Cell attachment site motif lies at 691–693 (RGD). Residues 723–851 (KVVKGTFTRS…NVDDNNVLEE (129 aa)) are spacer. TSP type-1 domains follow at residues 854–912 (VVYE…NPQE), 914–971 (SQPV…RACS), and 975–1029 (CPGR…GPCP). Asparagine 949 and asparagine 993 each carry an N-linked (GlcNAc...) asparagine glycan. 3 cysteine pairs are disulfide-bonded: cysteine 987/cysteine 1023, cysteine 991/cysteine 1028, and cysteine 1002/cysteine 1012. An N-linked (GlcNAc...) asparagine glycan is attached at asparagine 1031. One can recognise a PLAC domain in the interval 1059 to 1097 (SKGHCQGDKSIFCRMEVLSRYCSIPGYNKLCCKSCNLYN). 3 N-linked (GlcNAc...) asparagine glycosylation sites follow: asparagine 1098, asparagine 1145, and asparagine 1150. Residues 1170–1191 (LEDEVQPPNLIPRRPSPYEKTR) are disordered.

As to quaternary structure, may belong to a multimeric complex. Binds specifically to collagen type XIV. It depends on Zn(2+) as a cofactor. The precursor is cleaved by a furin endopeptidase. Post-translationally, glycosylated. Can be O-fucosylated by POFUT2 on a serine or a threonine residue found within the consensus sequence C1-X(2)-(S/T)-C2-G of the TSP type-1 repeat domains where C1 and C2 are the first and second cysteine residue of the repeat, respectively. Fucosylated repeats can then be further glycosylated by the addition of a beta-1,3-glucose residue by the glucosyltransferase, B3GALTL. Fucosylation mediates the efficient secretion of ADAMTS family members. Can also be C-glycosylated with one or two mannose molecules on tryptophan residues within the consensus sequence W-X-X-W of the TPRs, and N-glycosylated. These other glycosylations can also facilitate secretion. Expressed at high level in skin, bone, tendon and aorta and at low levels in thymus and brain.

Its subcellular location is the secreted. The protein localises to the extracellular space. The protein resides in the extracellular matrix. The catalysed reaction is Cleaves the N-propeptide of collagen chain alpha1(I) at Pro-|-Gln and of alpha1(II) and alpha2(I) at Ala-|-Gln.. Cleaves the propeptides of type I and II collagen prior to fibril assembly. Does not act on type III collagen. Cleaves lysyl oxidase LOX at a site downstream of its propeptide cleavage site to produce a short LOX form with reduced collagen-binding activity. The polypeptide is A disintegrin and metalloproteinase with thrombospondin motifs 2 (ADAMTS2) (Homo sapiens (Human)).